The following is a 157-amino-acid chain: Cyclic pyranopterin monophosphate synthase (157 aa).

Residues 74 to 76 (MCH) and 112 to 113 (ME) contribute to the substrate site. The active site involves Asp127.

Belongs to the MoaC family. As to quaternary structure, homohexamer; trimer of dimers.

It carries out the reaction (8S)-3',8-cyclo-7,8-dihydroguanosine 5'-triphosphate = cyclic pyranopterin phosphate + diphosphate. It functions in the pathway cofactor biosynthesis; molybdopterin biosynthesis. Its function is as follows. Catalyzes the conversion of (8S)-3',8-cyclo-7,8-dihydroguanosine 5'-triphosphate to cyclic pyranopterin monophosphate (cPMP). The chain is Cyclic pyranopterin monophosphate synthase from Campylobacter lari (strain RM2100 / D67 / ATCC BAA-1060).